A 300-amino-acid chain; its full sequence is SNAP25 homologous protein SNAP33 (300 aa).

2 disordered regions span residues 1–76 and 176–228; these read MFGL…QSLF and WKPK…PESA. At Ser-29 the chain carries Phosphoserine. Polar residues predominate over residues 38-49; sequence TLNPSKRTTSEP. A compositionally biased stretch (basic and acidic residues) spans 190–208; it reads TRDDSPTRRVNHLEKREKL. A t-SNARE coiled-coil homology domain is found at 235-297; it reads EMEKAKQDDG…QQSNQRGRRL (63 aa).

Belongs to the SNAP-25 family. Interacts with the cytokinesis-specific syntaxin KNOLLE and with SYP121. Binds to EXO70B2. Ubiquitous, with a strong expression in root tips, ovules, very young leaves, vascular tissue, hydathodes, stipules and the abscission and dehiscence zones of the siliques.

The protein resides in the membrane. Functionally, t-SNARE involved in diverse vesicle trafficking and membrane fusion processes, including cell plate formation. May function in the secretory pathway. The protein is SNAP25 homologous protein SNAP33 of Arabidopsis thaliana (Mouse-ear cress).